The sequence spans 431 residues: Trigger factor (431 aa).

Positions 164–249 constitute a PPIase FKBP-type domain; sequence GNIAVIDFKG…IKEIKVKELP (86 aa).

This sequence belongs to the FKBP-type PPIase family. Tig subfamily.

It localises to the cytoplasm. The enzyme catalyses [protein]-peptidylproline (omega=180) = [protein]-peptidylproline (omega=0). Its function is as follows. Involved in protein export. Acts as a chaperone by maintaining the newly synthesized protein in an open conformation. Functions as a peptidyl-prolyl cis-trans isomerase. The chain is Trigger factor from Clostridium tetani (strain Massachusetts / E88).